A 301-amino-acid chain; its full sequence is Protoheme IX farnesyltransferase (301 aa).

9 consecutive transmembrane segments (helical) span residues 29-49 (VVALMLLTVLVGMCLAVPGTV), 51-71 (LVPLIAGMAGIGMMAGSAAAF), 96-116 (ISIIKAISFASILGTLGFIIL), 123-143 (LTAWLTFASLIGYAVVYTAYL), 151-171 (IVVGGLAGAMPPLLGWTAVTG), 177-197 (ALLLVIIIFAWTPPHFWALAI), 223-243 (CIFLYTVLLAIACLLPVLVGM), 244-264 (CGPVYLVSSTLLSAGFIYKAW), and 281-301 (FSIYHLMLLFIALLVDHYLWV).

The protein belongs to the UbiA prenyltransferase family. Protoheme IX farnesyltransferase subfamily.

Its subcellular location is the cell inner membrane. It carries out the reaction heme b + (2E,6E)-farnesyl diphosphate + H2O = Fe(II)-heme o + diphosphate. It functions in the pathway porphyrin-containing compound metabolism; heme O biosynthesis; heme O from protoheme: step 1/1. Converts heme B (protoheme IX) to heme O by substitution of the vinyl group on carbon 2 of heme B porphyrin ring with a hydroxyethyl farnesyl side group. The polypeptide is Protoheme IX farnesyltransferase (Shewanella pealeana (strain ATCC 700345 / ANG-SQ1)).